The following is a 300-amino-acid chain: MRCLALDIGGTKIAAAIVKNGEIEQRQQIHTPRENVVEGMHQALGKLLADYEGQFDYVAVASTGIINNGILSALNPKNLGGLAEFPLKASIAKHTDKPIGLLNDAQAATYAEYQLQNFEQVSNFVFITVSTGVGGGIVLNQILQTGSRGIAGHIGHTLADPNGAICGCGRRGCVEAIASGRAIEAVSSQWEDPCDPKEVFERFRKNDEKATALVERSAKAIANLIADLVISLDIQKIAIGGSVGLAEGYLSLVEKYLQDFPSIYCCEIETAKFGQDAGLIGAAYWVKDVLLDKPEGTIYG.

Residues 5-12 and 132-139 contribute to the ATP site; these read ALDIGGTK and GVGGGIVL. Zn(2+) contacts are provided by histidine 156, cysteine 166, cysteine 168, and cysteine 173.

It belongs to the ROK (NagC/XylR) family. NanK subfamily. As to quaternary structure, homodimer.

The enzyme catalyses an N-acyl-D-mannosamine + ATP = an N-acyl-D-mannosamine 6-phosphate + ADP + H(+). It functions in the pathway amino-sugar metabolism; N-acetylneuraminate degradation; D-fructose 6-phosphate from N-acetylneuraminate: step 2/5. Its function is as follows. Catalyzes the phosphorylation of N-acetylmannosamine (ManNAc) to ManNAc-6-P. This is N-acetylmannosamine kinase from Haemophilus influenzae (strain 86-028NP).